The following is a 206-amino-acid chain: GDT1-like protein sll0615 (206 aa).

5 helical membrane-spanning segments follow: residues 36–56, 58–78, 114–134, 151–171, and 185–205; these read WVLVGVVGGLAAMTILSVLMG, IFTFLPTRYINYAEVALFLIF, IVPRGWGIVVESFALTFVAEW, AWGVSAGAILGHTICAVIAVM, and VTLIGGLLFYLFAVVSWWTKI.

It belongs to the GDT1 family.

Its subcellular location is the cell membrane. This Synechocystis sp. (strain ATCC 27184 / PCC 6803 / Kazusa) protein is GDT1-like protein sll0615.